A 678-amino-acid polypeptide reads, in one-letter code: Alpha-L-arabinofuranosidase 1 (678 aa).

Residues 1-33 (MDMESWKLLRSVCVLSFLLGSCFVYQSLRVVDA) form the signal peptide. A CBM-cenC domain is found at 152-239 (NIEEGKKYKV…WIDQVSAMPV (88 aa)). Residues N181, N362, N523, and N555 are each glycosylated (N-linked (GlcNAc...) asparagine).

This sequence belongs to the glycosyl hydrolase 51 family. Expressed in roots, leaves, flowers, stems, siliques and seedlings. Observed in zones of cell proliferation, the vascular system and floral abscission zones. Expressed in the guard cells in stems, in xylem vessels and parenchyma cells surrounding the vessels, in the cambium and in the phloem, but not in the secondary xylem.

It is found in the secreted. The protein localises to the extracellular space. It localises to the extracellular matrix. The catalysed reaction is Hydrolysis of terminal non-reducing alpha-L-arabinofuranoside residues in alpha-L-arabinosides.. Functionally, may be involved in the coordinated dissolution of the cell wall matrix during abscission and in the secondary cell wall formation in xylem vessels. Prefers arabinoxylan, but may also use pectic arabinans as substrates. This Arabidopsis thaliana (Mouse-ear cress) protein is Alpha-L-arabinofuranosidase 1 (ASD1).